A 669-amino-acid polypeptide reads, in one-letter code: Glutamate--cysteine ligase (669 aa).

This sequence belongs to the glutamate--cysteine ligase type 3 family. In terms of assembly, heterodimer of a catalytic heavy chain and a regulatory light chain.

The catalysed reaction is L-cysteine + L-glutamate + ATP = gamma-L-glutamyl-L-cysteine + ADP + phosphate + H(+). It participates in sulfur metabolism; glutathione biosynthesis; glutathione from L-cysteine and L-glutamate: step 1/2. Its function is as follows. Catalyzes the ATP-dependent ligation of L-glutamate and L-cysteine and participates in the first and rate-limiting step in glutathione biosynthesis. This chain is Glutamate--cysteine ligase (gcs1), found in Schizosaccharomyces pombe (strain 972 / ATCC 24843) (Fission yeast).